Consider the following 596-residue polypeptide: DNA mismatch repair protein MutL (596 aa).

Belongs to the DNA mismatch repair MutL/HexB family.

This protein is involved in the repair of mismatches in DNA. It is required for dam-dependent methyl-directed DNA mismatch repair. May act as a 'molecular matchmaker', a protein that promotes the formation of a stable complex between two or more DNA-binding proteins in an ATP-dependent manner without itself being part of a final effector complex. This is DNA mismatch repair protein MutL from Leptospira borgpetersenii serovar Hardjo-bovis (strain L550).